The sequence spans 601 residues: Elongation factor 4 (601 aa).

A tr-type G domain is found at 6–188 (SHIRNFSIIA…QIVHRVPPPE (183 aa)). GTP contacts are provided by residues 18–23 (DHGKST) and 135–138 (NKID).

This sequence belongs to the TRAFAC class translation factor GTPase superfamily. Classic translation factor GTPase family. LepA subfamily.

The protein localises to the cell inner membrane. The catalysed reaction is GTP + H2O = GDP + phosphate + H(+). Required for accurate and efficient protein synthesis under certain stress conditions. May act as a fidelity factor of the translation reaction, by catalyzing a one-codon backward translocation of tRNAs on improperly translocated ribosomes. Back-translocation proceeds from a post-translocation (POST) complex to a pre-translocation (PRE) complex, thus giving elongation factor G a second chance to translocate the tRNAs correctly. Binds to ribosomes in a GTP-dependent manner. The chain is Elongation factor 4 from Anaeromyxobacter dehalogenans (strain 2CP-C).